The sequence spans 303 residues: Probable 5-dehydro-4-deoxyglucarate dehydratase (303 aa).

This sequence belongs to the DapA family.

The enzyme catalyses 5-dehydro-4-deoxy-D-glucarate + H(+) = 2,5-dioxopentanoate + CO2 + H2O. It participates in carbohydrate acid metabolism; D-glucarate degradation; 2,5-dioxopentanoate from D-glucarate: step 2/2. The sequence is that of Probable 5-dehydro-4-deoxyglucarate dehydratase from Pseudomonas putida (strain ATCC 700007 / DSM 6899 / JCM 31910 / BCRC 17059 / LMG 24140 / F1).